Reading from the N-terminus, the 404-residue chain is ATP phosphoribosyltransferase regulatory subunit (404 aa).

This sequence belongs to the class-II aminoacyl-tRNA synthetase family. HisZ subfamily. In terms of assembly, heteromultimer composed of HisG and HisZ subunits.

It localises to the cytoplasm. Its pathway is amino-acid biosynthesis; L-histidine biosynthesis; L-histidine from 5-phospho-alpha-D-ribose 1-diphosphate: step 1/9. In terms of biological role, required for the first step of histidine biosynthesis. May allow the feedback regulation of ATP phosphoribosyltransferase activity by histidine. The polypeptide is ATP phosphoribosyltransferase regulatory subunit (Picosynechococcus sp. (strain ATCC 27264 / PCC 7002 / PR-6) (Agmenellum quadruplicatum)).